The sequence spans 361 residues: Holliday junction branch migration complex subunit RuvB (361 aa).

Residues 1 to 25 (MSIHTDDFGQGGFAQGGFPPDKAPD) are disordered. Residues 5–207 (TDDFGQGGFA…FGIVARLEFY (203 aa)) form a large ATPase domain (RuvB-L) region. Residues Leu46, Arg47, Gly88, Lys91, Thr92, Thr93, 154–156 (EDY), Arg197, Tyr207, and Arg244 each bind ATP. Thr92 lines the Mg(2+) pocket. The segment at 208–278 (TAEELARIVR…LADRALAMLD (71 aa)) is small ATPAse domain (RuvB-S). The tract at residues 281 to 361 (PQGFDIMDRK…GLPVPGDDAS (81 aa)) is head domain (RuvB-H). DNA-binding residues include Arg336 and Arg341.

It belongs to the RuvB family. As to quaternary structure, homohexamer. Forms an RuvA(8)-RuvB(12)-Holliday junction (HJ) complex. HJ DNA is sandwiched between 2 RuvA tetramers; dsDNA enters through RuvA and exits via RuvB. An RuvB hexamer assembles on each DNA strand where it exits the tetramer. Each RuvB hexamer is contacted by two RuvA subunits (via domain III) on 2 adjacent RuvB subunits; this complex drives branch migration. In the full resolvosome a probable DNA-RuvA(4)-RuvB(12)-RuvC(2) complex forms which resolves the HJ.

It localises to the cytoplasm. It catalyses the reaction ATP + H2O = ADP + phosphate + H(+). Its function is as follows. The RuvA-RuvB-RuvC complex processes Holliday junction (HJ) DNA during genetic recombination and DNA repair, while the RuvA-RuvB complex plays an important role in the rescue of blocked DNA replication forks via replication fork reversal (RFR). RuvA specifically binds to HJ cruciform DNA, conferring on it an open structure. The RuvB hexamer acts as an ATP-dependent pump, pulling dsDNA into and through the RuvAB complex. RuvB forms 2 homohexamers on either side of HJ DNA bound by 1 or 2 RuvA tetramers; 4 subunits per hexamer contact DNA at a time. Coordinated motions by a converter formed by DNA-disengaged RuvB subunits stimulates ATP hydrolysis and nucleotide exchange. Immobilization of the converter enables RuvB to convert the ATP-contained energy into a lever motion, pulling 2 nucleotides of DNA out of the RuvA tetramer per ATP hydrolyzed, thus driving DNA branch migration. The RuvB motors rotate together with the DNA substrate, which together with the progressing nucleotide cycle form the mechanistic basis for DNA recombination by continuous HJ branch migration. Branch migration allows RuvC to scan DNA until it finds its consensus sequence, where it cleaves and resolves cruciform DNA. The sequence is that of Holliday junction branch migration complex subunit RuvB from Delftia acidovorans (strain DSM 14801 / SPH-1).